The primary structure comprises 494 residues: Probable capsid protein (494 aa).

A Nuclear localization signal motif is present at residues 120–123 (RPKR). A CCHC-type zinc finger spans residues 418–435 (CRCWVCNIEGHYANECPN). The disordered stretch occupies residues 474–494 (LSSSDSELDDTCEESSSEESE). Acidic residues predominate over residues 479 to 494 (SELDDTCEESSSEESE).

This sequence belongs to the caulimoviridae capsid protein family. In terms of assembly, interacts (via nuclear localization signal) with host importin alpha.

It is found in the virion. The protein localises to the host nucleus. Self assembles to form an icosahedral capsid, about 50 nm in diameter, nm, composed of 420 subunits of the viral capsid protein. The capsid encapsulates the genomic dsDNA. Following virus entry into host cell, provides nuclear import of the viral genome. Virus particles do not enter the nucleus, but dock at the nuclear membrane through the interaction with host importins. This chain is Probable capsid protein, found in Dianthus caryophyllus (Carnation).